Consider the following 79-residue polypeptide: Small ribosomal subunit protein bS18 (79 aa).

This sequence belongs to the bacterial ribosomal protein bS18 family. Part of the 30S ribosomal subunit. Forms a tight heterodimer with protein bS6.

Its function is as follows. Binds as a heterodimer with protein bS6 to the central domain of the 16S rRNA, where it helps stabilize the platform of the 30S subunit. The chain is Small ribosomal subunit protein bS18 from Bacillus licheniformis (strain ATCC 14580 / DSM 13 / JCM 2505 / CCUG 7422 / NBRC 12200 / NCIMB 9375 / NCTC 10341 / NRRL NRS-1264 / Gibson 46).